Consider the following 641-residue polypeptide: Hemagglutinin-esterase-fusion glycoprotein (641 aa).

Residues 1-26 form a fusion domain-1 region; the sequence is EKIKICLQKQVNSSFSLHNGFGGNLY. Over 1 to 616 the chain is Extracellular; sequence EKIKICLQKQ…QSDPFYWGSS (616 aa). Cystine bridges form between cysteine 6/cysteine 569, cysteine 106/cysteine 151, cysteine 126/cysteine 174, cysteine 196/cysteine 238, cysteine 215/cysteine 302, cysteine 223/cysteine 275, and cysteine 332/cysteine 338. Residues asparagine 12 and asparagine 47 are each glycosylated (N-linked (GlcNAc...) asparagine; by host). The interval 27–137 is esterase domain-1; sequence ATEEKRMFEL…RKNWTDIKLN (111 aa). Serine 57 functions as the Nucleophile in the catalytic mechanism. An N-linked (GlcNAc...) asparagine; by host glycan is attached at asparagine 130. The tract at residues 137–296 is N-acetyl-9-O-acetylneuraminic acid binding; it reads NFQKNIYELA…VRSSPRFLLM (160 aa). The tract at residues 297–351 is esterase domain-2; that stretch reads PERSYCFDMKEKGPVTAVQSIWGKDRKSDYAVDQACLSTPGCMLIQKQKPYTGEA. Active-site charge relay system residues include aspartate 352 and histidine 355. A fusion domain-2 region spans residues 352–637; the sequence is DDHHGDQEMR…AALVISGIAI (286 aa). Asparagine 381 carries an N-linked (GlcNAc...) asparagine; by host glycan. A helical transmembrane segment spans residues 617-637; the sequence is LGLAITAAISLAALVISGIAI. At 638 to 641 the chain is on the cytoplasmic side; the sequence is CRTK.

Belongs to the influenza type C/coronaviruses hemagglutinin-esterase family. As to quaternary structure, homotrimer of disulfide-linked HEF1-HEF2. Post-translationally, in natural infection, inactive HEF is matured into HEF1 and HEF2 outside the cell by one or more trypsin-like, arginine-specific endoprotease.

The protein resides in the virion membrane. It localises to the host cell membrane. It catalyses the reaction N-acetyl-9-O-acetylneuraminate + H2O = N-acetylneuraminate + acetate + H(+). The enzyme catalyses N-acetyl-4-O-acetylneuraminate + H2O = N-acetylneuraminate + acetate + H(+). Binds to the N-acetyl-9-O-acetylneuraminic acid residues on the cell surface, bringing about the attachment of the virus particle to the cell. Plays a major role in the determination of host range restriction and virulence. Class I viral fusion protein. Responsible for penetration of the virus into the cell cytoplasm by mediating the fusion of the membrane of the endocytosed virus particle with the endosomal membrane. Low pH in endosomes induce an irreversible conformational change in HEF2, releasing the fusion hydrophobic peptide. Several trimers are required to form a competent fusion pore. Displays a receptor-destroying activity which is a neuraminidate-O-acetyl esterase. This activity cleaves off any receptor on the cell surface, which would otherwise prevent virions release. These cleavages prevent self-aggregation and ensure the efficient spread of the progeny virus from cell to cell. In Influenza C virus (strain C/Kyoto/41/1982), this protein is Hemagglutinin-esterase-fusion glycoprotein (HE).